Reading from the N-terminus, the 774-residue chain is Multiple C2 domain and transmembrane region protein 11 (774 aa).

Residues 1–12 (MAVNGTGNGTGD) are compositionally biased toward gly residues. Positions 1–30 (MAVNGTGNGTGDGDFSLKETSPNIGNGGVN) are disordered. C2 domains are found at residues 9-145 (GTGD…PQWY), 184-307 (VTGE…SLWY), and 338-471 (LDES…THSY). Ca(2+) contacts are provided by aspartate 62, asparagine 110, aspartate 112, and aspartate 118. The next 2 helical transmembrane spans lie at 608-628 (LFVV…CFVF) and 722-742 (FVSC…FLAF).

Belongs to the MCTP family. Ca(2+) serves as cofactor. In terms of tissue distribution, observed in flowers.

The protein localises to the endoplasmic reticulum membrane. May function as a signaling molecule by regulating the trafficking of other regulators. The polypeptide is Multiple C2 domain and transmembrane region protein 11 (Arabidopsis thaliana (Mouse-ear cress)).